The chain runs to 479 residues: Protein phosphatase 1B (479 aa).

A compositionally biased stretch (basic and acidic residues) spans 1–14; it reads MGAFLDKPKTEKHN. The tract at residues 1–20 is disordered; sequence MGAFLDKPKTEKHNAHGAGN. The N-myristoyl glycine moiety is linked to residue G2. A Glycyl lysine isopeptide (Lys-Gly) (interchain with G-Cter in ISG15) cross-link involves residue K12. One can recognise a PPM-type phosphatase domain in the interval 23-295; sequence RYGLSSMQGW…DNMSIVLVCF (273 aa). Residues D60 and G61 each coordinate Mn(2+). Residue K142 forms a Glycyl lysine isopeptide (Lys-Gly) (interchain with G-Cter in ISG15) linkage. Residues D243 and D286 each coordinate Mn(2+). S386 carries the post-translational modification Phosphoserine. Residues 423 to 479 form a disordered region; it reads VEGEESPAEPAATATSSNSDAGNPVTMQESHTESESGLAELDSSNEDAGTKMSGEKI. Positions 430-439 are enriched in low complexity; sequence AEPAATATSS. A compositionally biased stretch (polar residues) spans 440-451; the sequence is NSDAGNPVTMQE.

This sequence belongs to the PP2C family. In terms of assembly, monomer. Interacts with PAK6. Interacts with the phosphorylated form of IKBKB/IKKB. Mg(2+) serves as cofactor. Mn(2+) is required as a cofactor. Isgylation negatively regulates its activity. In terms of processing, N-myristoylation is essential for the recognition of its substrates for dephosphorylation. In terms of tissue distribution, highly expressed in heart and skeletal muscle.

The protein resides in the cytoplasm. Its subcellular location is the cytosol. It is found in the membrane. The catalysed reaction is O-phospho-L-seryl-[protein] + H2O = L-seryl-[protein] + phosphate. It catalyses the reaction O-phospho-L-threonyl-[protein] + H2O = L-threonyl-[protein] + phosphate. Functionally, enzyme with a broad specificity. Dephosphorylates CDK2 and CDK6 in vitro. Dephosphorylates PRKAA1 and PRKAA2. Inhibits TBK1-mediated antiviral signaling by dephosphorylating it at 'Ser-172'. Plays an important role in the termination of TNF-alpha-mediated NF-kappa-B activation through dephosphorylating and inactivating IKBKB/IKKB. The sequence is that of Protein phosphatase 1B (PPM1B) from Homo sapiens (Human).